The following is a 294-amino-acid chain: Peroxidase-like protein 3 (294 aa).

N-linked (GlcNAc...) asparagine glycosylation occurs at N129.

This sequence belongs to the peroxidase family. As to expression, component of the acid-insoluble and acid-soluble organic matrix of calcified layers of the shell (at protein level).

It is found in the secreted. The polypeptide is Peroxidase-like protein 3 (Lottia gigantea (Giant owl limpet)).